The sequence spans 359 residues: CMP-N-acetylneuraminate-poly-alpha-2,8-sialyltransferase (359 aa).

The Cytoplasmic segment spans residues 1 to 7 (MRSIRKR). Residues 8–20 (WTICTISLLLIFY) form a helical; Signal-anchor for type II membrane protein membrane-spanning segment. The Lumenal portion of the chain corresponds to 21-359 (KTKEIARTEE…KLTTGKCMKQ (339 aa)). N-linked (GlcNAc...) asparagine glycosylation is found at N50, N74, and N119. Disulfide bonds link C142–C292 and C156–C356. N147 and N170 together coordinate CMP-N-acetyl-beta-neuraminate. Residues N204 and N219 are each glycosylated (N-linked (GlcNAc...) asparagine). Residues S279, T280, G281, and W301 each coordinate CMP-N-acetyl-beta-neuraminate. Catalysis depends on H331, which acts as the Proton donor/acceptor.

It belongs to the glycosyltransferase 29 family. Post-translationally, autopolysialylated.

It is found in the golgi apparatus membrane. Its subcellular location is the secreted. It catalyses the reaction [N-acetyl-alpha-D-neuraminosyl-(2-&gt;8)](n) + CMP-N-acetyl-beta-neuraminate = [N-acetyl-alpha-D-neuraminosyl-(2-&gt;8)](n+1) + CMP + H(+). Its pathway is protein modification; protein glycosylation. Its function is as follows. Catalyzes the transfer of a sialic acid from a CMP-linked sialic acid donor onto a terminal alpha-2,3-, alpha-2,6-, or alpha-2,8-linked sialic acid of an N-linked glycan protein acceptor through alpha-2,8-linkages. Therefore, participates in polysialic acid synthesis on various sialylated N-acetyllactosaminyl oligosaccharides, including NCAM1 N-glycans, FETUB N-glycans and AHSG. It is noteworthy that alpha-2,3-linked sialic acid is apparently a better acceptor than alpha-2,6-linked sialic acid. The sequence is that of CMP-N-acetylneuraminate-poly-alpha-2,8-sialyltransferase from Cricetulus griseus (Chinese hamster).